We begin with the raw amino-acid sequence, 378 residues long: UDP-N-acetylglucosamine--N-acetylmuramyl-(pentapeptide) pyrophosphoryl-undecaprenol N-acetylglucosamine transferase (378 aa).

UDP-N-acetyl-alpha-D-glucosamine contacts are provided by residues 14-16 (TGG), N125, R165, S193, and Q293.

Belongs to the glycosyltransferase 28 family. MurG subfamily.

It is found in the cell inner membrane. The enzyme catalyses di-trans,octa-cis-undecaprenyl diphospho-N-acetyl-alpha-D-muramoyl-L-alanyl-D-glutamyl-meso-2,6-diaminopimeloyl-D-alanyl-D-alanine + UDP-N-acetyl-alpha-D-glucosamine = di-trans,octa-cis-undecaprenyl diphospho-[N-acetyl-alpha-D-glucosaminyl-(1-&gt;4)]-N-acetyl-alpha-D-muramoyl-L-alanyl-D-glutamyl-meso-2,6-diaminopimeloyl-D-alanyl-D-alanine + UDP + H(+). The protein operates within cell wall biogenesis; peptidoglycan biosynthesis. In terms of biological role, cell wall formation. Catalyzes the transfer of a GlcNAc subunit on undecaprenyl-pyrophosphoryl-MurNAc-pentapeptide (lipid intermediate I) to form undecaprenyl-pyrophosphoryl-MurNAc-(pentapeptide)GlcNAc (lipid intermediate II). The sequence is that of UDP-N-acetylglucosamine--N-acetylmuramyl-(pentapeptide) pyrophosphoryl-undecaprenol N-acetylglucosamine transferase from Bartonella quintana (strain Toulouse) (Rochalimaea quintana).